The chain runs to 135 residues: Large ribosomal subunit protein uL16c (135 aa).

This sequence belongs to the universal ribosomal protein uL16 family. Part of the 50S ribosomal subunit.

Its subcellular location is the plastid. It is found in the chloroplast. This chain is Large ribosomal subunit protein uL16c, found in Drimys granadensis.